A 60-amino-acid chain; its full sequence is Large ribosomal subunit protein bL32 (60 aa).

Belongs to the bacterial ribosomal protein bL32 family.

The protein is Large ribosomal subunit protein bL32 of Clostridium perfringens (strain ATCC 13124 / DSM 756 / JCM 1290 / NCIMB 6125 / NCTC 8237 / Type A).